The following is a 102-amino-acid chain: MAKKCMVNREIKRIKTVKKFAAKREELKEIIRKVATYSDEERAAAQEKLQKLPRNASPSRVQRRCRITGRPHAVYRKFGLSRIKLRELTMRGEVPGVRKASW.

It belongs to the universal ribosomal protein uS14 family. Part of the 30S ribosomal subunit. Contacts proteins S3 and S10.

Its function is as follows. Binds 16S rRNA, required for the assembly of 30S particles and may also be responsible for determining the conformation of the 16S rRNA at the A site. The protein is Small ribosomal subunit protein uS14 of Dichelobacter nodosus (strain VCS1703A).